The sequence spans 87 residues: Small ribosomal subunit protein bS20 (87 aa).

A compositionally biased stretch (basic residues) spans methionine 1–alanine 11. Residues methionine 1–methionine 27 form a disordered region.

The protein belongs to the bacterial ribosomal protein bS20 family.

Binds directly to 16S ribosomal RNA. The protein is Small ribosomal subunit protein bS20 of Actinobacillus succinogenes (strain ATCC 55618 / DSM 22257 / CCUG 43843 / 130Z).